Reading from the N-terminus, the 507-residue chain is Light-independent protochlorophyllide reductase subunit B (507 aa).

Residue Asp-36 coordinates [4Fe-4S] cluster. The Proton donor role is filled by Asp-293. 428–429 (GM) contacts substrate.

Belongs to the ChlB/BchB/BchZ family. Protochlorophyllide reductase is composed of three subunits; ChlL, ChlN and ChlB. Forms a heterotetramer of two ChlB and two ChlN subunits. Requires [4Fe-4S] cluster as cofactor.

The protein resides in the plastid. It localises to the chloroplast. It carries out the reaction chlorophyllide a + oxidized 2[4Fe-4S]-[ferredoxin] + 2 ADP + 2 phosphate = protochlorophyllide a + reduced 2[4Fe-4S]-[ferredoxin] + 2 ATP + 2 H2O. Its pathway is porphyrin-containing compound metabolism; chlorophyll biosynthesis (light-independent). In terms of biological role, component of the dark-operative protochlorophyllide reductase (DPOR) that uses Mg-ATP and reduced ferredoxin to reduce ring D of protochlorophyllide (Pchlide) to form chlorophyllide a (Chlide). This reaction is light-independent. The NB-protein (ChlN-ChlB) is the catalytic component of the complex. The polypeptide is Light-independent protochlorophyllide reductase subunit B (Porphyra purpurea (Red seaweed)).